The sequence spans 201 residues: UPF0301 protein RHE_CH00966 (201 aa).

The protein belongs to the UPF0301 (AlgH) family.

In Rhizobium etli (strain ATCC 51251 / DSM 11541 / JCM 21823 / NBRC 15573 / CFN 42), this protein is UPF0301 protein RHE_CH00966.